A 467-amino-acid chain; its full sequence is Probable glycerol-3-phosphate dehydrogenase [NAD(+)] 2, cytosolic (467 aa).

Residues 47-52 (GAGAWG), Lys195, and Ala234 each bind NAD(+). Lys195 is a binding site for substrate. Lys284 serves as the catalytic Proton acceptor. Positions 346 and 374 each coordinate NAD(+). A substrate-binding site is contributed by 346 to 347 (RN).

It belongs to the NAD-dependent glycerol-3-phosphate dehydrogenase family.

Its subcellular location is the cytoplasm. The protein localises to the cytosol. It carries out the reaction sn-glycerol 3-phosphate + NAD(+) = dihydroxyacetone phosphate + NADH + H(+). Functionally, may be involved in cell redox homeostasis. The chain is Probable glycerol-3-phosphate dehydrogenase [NAD(+)] 2, cytosolic from Oryza sativa subsp. japonica (Rice).